Consider the following 252-residue polypeptide: Chitooligosaccharide deacetylase (252 aa).

2 residues coordinate Mg(2+): H61 and H125.

Belongs to the YdjC deacetylase family. ChbG subfamily. In terms of assembly, homodimer. Mg(2+) serves as cofactor.

It is found in the cytoplasm. It catalyses the reaction N,N'-diacetylchitobiose + H2O = N-acetyl-beta-D-glucosaminyl-(1-&gt;4)-D-glucosamine + acetate. The catalysed reaction is diacetylchitobiose-6'-phosphate + H2O = N'-monoacetylchitobiose-6'-phosphate + acetate. Its pathway is glycan degradation; chitin degradation. Its function is as follows. Involved in the degradation of chitin. ChbG is essential for growth on the acetylated chitooligosaccharides chitobiose and chitotriose but is dispensable for growth on cellobiose and chitosan dimer, the deacetylated form of chitobiose. Deacetylation of chitobiose-6-P and chitotriose-6-P is necessary for both the activation of the chb promoter by the regulatory protein ChbR and the hydrolysis of phosphorylated beta-glucosides by the phospho-beta-glucosidase ChbF. Catalyzes the removal of only one acetyl group from chitobiose-6-P to yield monoacetylchitobiose-6-P, the inducer of ChbR and the substrate of ChbF. The chain is Chitooligosaccharide deacetylase from Escherichia coli (strain 55989 / EAEC).